The chain runs to 92 residues: UPF0473 protein BCE33L4129 (92 aa).

This sequence belongs to the UPF0473 family.

This chain is UPF0473 protein BCE33L4129, found in Bacillus cereus (strain ZK / E33L).